The following is a 1075-amino-acid chain: Carbamoyl phosphate synthase large chain (1075 aa).

The segment at 2 to 403 is carboxyphosphate synthetic domain; sequence PKRTDIKSIL…SLQKALRGLE (402 aa). The ATP site is built by Arg-129, Arg-169, Gly-175, Gly-176, Glu-208, Leu-210, Glu-215, Gly-241, Ile-242, His-243, Gln-285, and Glu-299. The 196-residue stretch at 133-328 folds into the ATP-grasp 1 domain; it reads DIAMKKIGLD…IAKVAAKLAV (196 aa). Mg(2+) contacts are provided by Gln-285, Glu-299, and Asn-301. Residues Gln-285, Glu-299, and Asn-301 each contribute to the Mn(2+) site. Residues 404–553 form an oligomerization domain region; sequence VGATGFDPKV…YSTYEDECEA (150 aa). The carbamoyl phosphate synthetic domain stretch occupies residues 554–936; that stretch reads NPSIDRDKIM…AFAKAQLGSN (383 aa). In terms of domain architecture, ATP-grasp 2 spans 679 to 870; that stretch reads QHAVDRLKLK…LAKVAARVMA (192 aa). ATP contacts are provided by Arg-715, Arg-754, Leu-756, Glu-761, Gly-786, Val-787, His-788, Ser-789, Gln-829, and Glu-841. Gln-829, Glu-841, and Asn-843 together coordinate Mg(2+). Mn(2+) contacts are provided by Gln-829, Glu-841, and Asn-843. Residues 937 to 1075 enclose the MGS-like domain; that stretch reads STMKKQGRAL…QEMHAQIKKS (139 aa). An allosteric domain region spans residues 937 to 1075; sequence STMKKQGRAL…QEMHAQIKKS (139 aa).

This sequence belongs to the CarB family. Composed of two chains; the small (or glutamine) chain promotes the hydrolysis of glutamine to ammonia, which is used by the large (or ammonia) chain to synthesize carbamoyl phosphate. Tetramer of heterodimers (alpha,beta)4. Requires Mg(2+) as cofactor. Mn(2+) is required as a cofactor.

The catalysed reaction is hydrogencarbonate + L-glutamine + 2 ATP + H2O = carbamoyl phosphate + L-glutamate + 2 ADP + phosphate + 2 H(+). It carries out the reaction hydrogencarbonate + NH4(+) + 2 ATP = carbamoyl phosphate + 2 ADP + phosphate + 2 H(+). It participates in amino-acid biosynthesis; L-arginine biosynthesis; carbamoyl phosphate from bicarbonate: step 1/1. It functions in the pathway pyrimidine metabolism; UMP biosynthesis via de novo pathway; (S)-dihydroorotate from bicarbonate: step 1/3. In terms of biological role, large subunit of the glutamine-dependent carbamoyl phosphate synthetase (CPSase). CPSase catalyzes the formation of carbamoyl phosphate from the ammonia moiety of glutamine, carbonate, and phosphate donated by ATP, constituting the first step of 2 biosynthetic pathways, one leading to arginine and/or urea and the other to pyrimidine nucleotides. The large subunit (synthetase) binds the substrates ammonia (free or transferred from glutamine from the small subunit), hydrogencarbonate and ATP and carries out an ATP-coupled ligase reaction, activating hydrogencarbonate by forming carboxy phosphate which reacts with ammonia to form carbamoyl phosphate. This chain is Carbamoyl phosphate synthase large chain, found in Salmonella typhimurium (strain LT2 / SGSC1412 / ATCC 700720).